Consider the following 238-residue polypeptide: Fibroblast growth factor-binding protein 1 (238 aa).

A signal peptide spans 1–20 (MRIHGLILLSFLLLAAQVLS). The disordered stretch occupies residues 25–61 (KTAKNVPDSTTEEDMSPSLGKARNKQRSRTSKSMTHG). 3 disulfide bridges follow: C71–C88, C97–C130, and C106–C142. O-linked (GalNAc...) serine glycosylation is present at S164. Residues 197-238 (KDSECLEDPDVLTQRKTALEFCGESWSSFCTFFLNMLQATSC) form a sufficient for interaction with FGF2 and FGF2-induced effects region. Cystine bridges form between C201–C238 and C218–C226.

It belongs to the fibroblast growth factor-binding protein family. Found in a complex with FGFBP1, FGF1 and FGF2. Interacts with FGF1, FGF2, FGF7, FGF10, FGF22 and HSPG2. As to expression, expressed in gut, eye, thymus, skin, lung, tongue, Purkinje cells and cerebral chorioid plexus (at protein level).

It localises to the secreted. The protein localises to the extracellular space. It is found in the cell membrane. Functionally, acts as a carrier protein that release fibroblast-binding factors (FGFs) from the extracellular matrix (EM) storage and thus enhance the mitogenic activity of FGFs. Enhances FGF2 signaling during tissue repair, angiogenesis and in tumor growth. This chain is Fibroblast growth factor-binding protein 1 (Fgfbp1), found in Rattus norvegicus (Rat).